A 150-amino-acid polypeptide reads, in one-letter code: SsrA-binding protein (150 aa).

Belongs to the SmpB family.

The protein resides in the cytoplasm. In terms of biological role, required for rescue of stalled ribosomes mediated by trans-translation. Binds to transfer-messenger RNA (tmRNA), required for stable association of tmRNA with ribosomes. tmRNA and SmpB together mimic tRNA shape, replacing the anticodon stem-loop with SmpB. tmRNA is encoded by the ssrA gene; the 2 termini fold to resemble tRNA(Ala) and it encodes a 'tag peptide', a short internal open reading frame. During trans-translation Ala-aminoacylated tmRNA acts like a tRNA, entering the A-site of stalled ribosomes, displacing the stalled mRNA. The ribosome then switches to translate the ORF on the tmRNA; the nascent peptide is terminated with the 'tag peptide' encoded by the tmRNA and targeted for degradation. The ribosome is freed to recommence translation, which seems to be the essential function of trans-translation. The polypeptide is SsrA-binding protein (Campylobacter curvus (strain 525.92)).